Here is a 450-residue protein sequence, read N- to C-terminus: Bifunctional apoptosis regulator (450 aa).

Residues 1 to 20 (MEEPQKNDLSMREQEEEHPV) are compositionally biased toward basic and acidic residues. The disordered stretch occupies residues 1–25 (MEEPQKNDLSMREQEEEHPVRSSGP). At 1-140 (MEEPQKNDLS…PSTGRVNPQR (140 aa)) the chain is on the cytoplasmic side. The segment at 34-74 (CHCCYDTLVNPTTLNCGHSFCRHCLALWWMSSKKTECPECR) adopts an RING-type zinc-finger fold. The chain crosses the membrane as a helical span at residues 141-161 (GGGFFSGVLTALTGVAVILLV). The Extracellular portion of the chain corresponds to 162-331 (YHWRSRESEH…REPTWKQWRE (170 aa)). Positions 182 to 249 (WTMEEVVLWL…LTELERVRAL (68 aa)) constitute an SAM domain. Residues Asn232 and Asn308 are each glycosylated (N-linked (GlcNAc...) asparagine). A helical transmembrane segment spans residues 332-352 (FLVKYSFLPYQLIAEFAWDWL). The Cytoplasmic segment spans residues 353-360 (EVHYWTSR). A helical membrane pass occupies residues 361–381 (FLIVNAVLLSVLELFSFWRIW). Residues 382 to 404 (SRSELKTVPQRMWSHFWKVSTQG) are Extracellular-facing. The helical transmembrane segment at 405 to 425 (LFMAMFWPLIPQFVCNCLFYW) threads the bilayer. The Cytoplasmic segment spans residues 426-450 (ALYFNPIINIDLVVKEVRRLETQVL).

As to quaternary structure, interacts with CASP8, BCL2 and BCL2L1 through SAM domain and also with HIP1, IFT57, ESRRBL1 and BCAP31. Interacts with NGFR; this interaction inhibits NF-kappa-B and JNK-related signaling pathways. Mediates RING-dependent self-ubiquitination leading to proteasomal degradation.

The protein localises to the endoplasmic reticulum membrane. It carries out the reaction S-ubiquitinyl-[E2 ubiquitin-conjugating enzyme]-L-cysteine + [acceptor protein]-L-lysine = [E2 ubiquitin-conjugating enzyme]-L-cysteine + N(6)-ubiquitinyl-[acceptor protein]-L-lysine.. Functionally, membrane-bound E3 ubiquitin ligase that plays a role in several processes including apoptosis regulation or reticulum endoplasmic stress. Has anti-apoptotic activity, both for apoptosis triggered via death-receptors and via mitochondrial factors. Contributes to the dynamic control of IRE1/ERN1 signaling during ER stress by inducing BAX inhibitor 1/TMBIM6 proteasomal degradation. Promotes the activation of TGF-beta signaling by mediating the 'Lys-63'-linked ubiquitination of TGFBR1 which is critical to activate the pathway. Together with NGFR, negatively regulates NF-kappa-B and JNK-related signaling pathways. Promotes the proteasome-mediated degradation of PNPLA3, a protein involveld in lipid metabolism. This Mus musculus (Mouse) protein is Bifunctional apoptosis regulator (Bfar).